We begin with the raw amino-acid sequence, 301 residues long: MAPSNLPPIFNATSQDIEMLLAAQCHLGSKNLQVHMDPYLWKTRPDGINVINIGKTWEKIVLAARIIAAIDNPADVCVISARPYGQRAVLKFAAHTGAAAIAGRFTPGNFTNYITRSFKEPRLIIVTDPRTDHQAIKEASYVNIPVIALCDTDSPTEFVDVAIPTNNKGRHAIGLIWWMLAREVLRLRGTIASRETEWDVVVDLYFYRDPEAEENKEIEEAKVPGAEEVGAAAIESGLVGDSWEAQVAPAFAATGAAVPAGAAPGWEAEAAGEWAASSGAAAGAAETWATDTAAPDAGVKW.

It belongs to the universal ribosomal protein uS2 family. Component of the small ribosomal subunit. Mature ribosomes consist of a small (40S) and a large (60S) subunit. The 40S subunit contains about 33 different proteins and 1 molecule of RNA (18S). The 60S subunit contains about 49 different proteins and 3 molecules of RNA (25S, 5.8S and 5S). Interacts with RPS21.

The protein resides in the cytoplasm. Required for the assembly and/or stability of the 40S ribosomal subunit. Required for the processing of the 20S rRNA-precursor to mature 18S rRNA in a late step of the maturation of 40S ribosomal subunits. This is Small ribosomal subunit protein uS2 from Ajellomyces dermatitidis (strain ER-3 / ATCC MYA-2586) (Blastomyces dermatitidis).